The primary structure comprises 162 residues: Protein NrdI (162 aa).

This sequence belongs to the NrdI family.

Functionally, probably involved in ribonucleotide reductase function. The sequence is that of Protein NrdI from Streptococcus pyogenes serotype M2 (strain MGAS10270).